The primary structure comprises 70 residues: DNA-directed RNA polymerase subunit epsilon (70 aa).

Belongs to the RNA polymerase subunit epsilon family. In terms of assembly, RNAP is composed of a core of 2 alpha, a beta and a beta' subunit. The core is associated with a delta subunit, and at least one of epsilon or omega. When a sigma factor is associated with the core the holoenzyme is formed, which can initiate transcription.

It catalyses the reaction RNA(n) + a ribonucleoside 5'-triphosphate = RNA(n+1) + diphosphate. Its function is as follows. A non-essential component of RNA polymerase (RNAP). This Enterococcus faecalis (strain ATCC 700802 / V583) protein is DNA-directed RNA polymerase subunit epsilon.